A 198-amino-acid polypeptide reads, in one-letter code: NAD(P)H dehydrogenase (quinone) (198 aa).

The Flavodoxin-like domain maps to 4–189 (VLVLYYSMYG…ALARYQGRHV (186 aa)). Residues 10–15 (SMYGHV) and 78–80 (TRF) each bind FMN. Residue tyrosine 12 participates in NAD(+) binding. Tryptophan 98 provides a ligand contact to substrate. Residues 113–118 (STGTGG) and histidine 133 each bind FMN.

This sequence belongs to the WrbA family. FMN is required as a cofactor.

The enzyme catalyses a quinone + NADH + H(+) = a quinol + NAD(+). It catalyses the reaction a quinone + NADPH + H(+) = a quinol + NADP(+). This Halorhodospira halophila (strain DSM 244 / SL1) (Ectothiorhodospira halophila (strain DSM 244 / SL1)) protein is NAD(P)H dehydrogenase (quinone).